The sequence spans 386 residues: Succinate--CoA ligase [ADP-forming] subunit beta (386 aa).

ATP-binding positions include lysine 46, 53–55 (GRG), glutamate 99, glutamine 102, and glutamate 107. Mg(2+)-binding residues include asparagine 199 and aspartate 213. Substrate contacts are provided by residues asparagine 264 and 321-323 (GIV).

This sequence belongs to the succinate/malate CoA ligase beta subunit family. In terms of assembly, heterotetramer of two alpha and two beta subunits. Mg(2+) is required as a cofactor.

It carries out the reaction succinate + ATP + CoA = succinyl-CoA + ADP + phosphate. It catalyses the reaction GTP + succinate + CoA = succinyl-CoA + GDP + phosphate. It participates in carbohydrate metabolism; tricarboxylic acid cycle; succinate from succinyl-CoA (ligase route): step 1/1. Its function is as follows. Succinyl-CoA synthetase functions in the citric acid cycle (TCA), coupling the hydrolysis of succinyl-CoA to the synthesis of either ATP or GTP and thus represents the only step of substrate-level phosphorylation in the TCA. The beta subunit provides nucleotide specificity of the enzyme and binds the substrate succinate, while the binding sites for coenzyme A and phosphate are found in the alpha subunit. This chain is Succinate--CoA ligase [ADP-forming] subunit beta, found in Ruthia magnifica subsp. Calyptogena magnifica.